A 142-amino-acid chain; its full sequence is Ribosome maturation factor RimP (142 aa).

Belongs to the RimP family.

The protein resides in the cytoplasm. Functionally, required for maturation of 30S ribosomal subunits. The chain is Ribosome maturation factor RimP from Wolinella succinogenes (strain ATCC 29543 / DSM 1740 / CCUG 13145 / JCM 31913 / LMG 7466 / NCTC 11488 / FDC 602W) (Vibrio succinogenes).